We begin with the raw amino-acid sequence, 181 residues long: Crossover junction endodeoxyribonuclease RuvC (181 aa).

Active-site residues include D7, E67, and D139. Positions 7, 67, and 139 each coordinate Mg(2+).

This sequence belongs to the RuvC family. As to quaternary structure, homodimer which binds Holliday junction (HJ) DNA. The HJ becomes 2-fold symmetrical on binding to RuvC with unstacked arms; it has a different conformation from HJ DNA in complex with RuvA. In the full resolvosome a probable DNA-RuvA(4)-RuvB(12)-RuvC(2) complex forms which resolves the HJ. Requires Mg(2+) as cofactor.

The protein resides in the cytoplasm. The catalysed reaction is Endonucleolytic cleavage at a junction such as a reciprocal single-stranded crossover between two homologous DNA duplexes (Holliday junction).. Its function is as follows. The RuvA-RuvB-RuvC complex processes Holliday junction (HJ) DNA during genetic recombination and DNA repair. Endonuclease that resolves HJ intermediates. Cleaves cruciform DNA by making single-stranded nicks across the HJ at symmetrical positions within the homologous arms, yielding a 5'-phosphate and a 3'-hydroxyl group; requires a central core of homology in the junction. The consensus cleavage sequence is 5'-(A/T)TT(C/G)-3'. Cleavage occurs on the 3'-side of the TT dinucleotide at the point of strand exchange. HJ branch migration catalyzed by RuvA-RuvB allows RuvC to scan DNA until it finds its consensus sequence, where it cleaves and resolves the cruciform DNA. In Ralstonia pickettii (strain 12J), this protein is Crossover junction endodeoxyribonuclease RuvC.